The following is a 115-amino-acid chain: uncharacterized protein (115 aa).

The MSP domain maps to M1–E115.

This is an uncharacterized protein from Caenorhabditis elegans.